We begin with the raw amino-acid sequence, 260 residues long: Carbonic anhydrase 3 (260 aa).

Ala2 is modified (N-acetylalanine). One can recognise an Alpha-carbonic anhydrase domain in the interval 3–259 (KEWGYASHNG…IKGRVVRASF (257 aa)). Residues Ser29, Ser43, Ser48, Ser50, and Ser55 each carry the phosphoserine modification. An involved in proton transfer region spans residues 64–67 (KTCR). Thr73 carries the post-translational modification Phosphothreonine. Zn(2+) contacts are provided by His94, His96, and His119. Position 127 is a phosphotyrosine (Tyr127). Thr129 is subject to Phosphothreonine. Cys182 and Cys187 each carry S-glutathionyl cysteine. 198–199 (TT) contributes to the substrate binding site. A Phosphothreonine modification is found at Thr216. A Phosphoserine modification is found at Ser219.

The protein belongs to the alpha-carbonic anhydrase family. Requires Zn(2+) as cofactor. S-thiolated both by thiol-disulfide exchange with glutathione disulfide and by oxyradical-initiated S-thiolation with reduced glutathione. In terms of processing, S-glutathionylated in hepatocytes under oxidative stress. Expressed in liver and muscle.

It is found in the cytoplasm. It catalyses the reaction hydrogencarbonate + H(+) = CO2 + H2O. With respect to regulation, inhibited by acetazolamide. Functionally, reversible hydration of carbon dioxide. The polypeptide is Carbonic anhydrase 3 (Ca3) (Rattus norvegicus (Rat)).